An 893-amino-acid chain; its full sequence is DNA gyrase subunit A (893 aa).

The 467-residue stretch at 35 to 501 (LPDVRDGLKP…GLEDLEDEDL (467 aa)) folds into the Topo IIA-type catalytic domain. The O-(5'-phospho-DNA)-tyrosine intermediate role is filled by tyrosine 123. The GyrA-box motif lies at 528 to 534 (QNRGGRG). The segment at 810-893 (VNEEDDNEEN…ASDNEEDSDE (84 aa)) is disordered. Acidic residues-rich tracts occupy residues 812–821 (EEDDNEENAD) and 852–862 (DAEMESVESPE). The segment covering 863 to 879 (NDDRIDIRQDFMDRVNE) has biased composition (basic and acidic residues). Residues 880 to 893 (DIESASDNEEDSDE) are compositionally biased toward acidic residues.

It belongs to the type II topoisomerase GyrA/ParC subunit family. Heterotetramer, composed of two GyrA and two GyrB chains. In the heterotetramer, GyrA contains the active site tyrosine that forms a transient covalent intermediate with DNA, while GyrB binds cofactors and catalyzes ATP hydrolysis.

Its subcellular location is the cytoplasm. The enzyme catalyses ATP-dependent breakage, passage and rejoining of double-stranded DNA.. Its function is as follows. A type II topoisomerase that negatively supercoils closed circular double-stranded (ds) DNA in an ATP-dependent manner to modulate DNA topology and maintain chromosomes in an underwound state. Negative supercoiling favors strand separation, and DNA replication, transcription, recombination and repair, all of which involve strand separation. Also able to catalyze the interconversion of other topological isomers of dsDNA rings, including catenanes and knotted rings. Type II topoisomerases break and join 2 DNA strands simultaneously in an ATP-dependent manner. The chain is DNA gyrase subunit A from Staphylococcus epidermidis (strain ATCC 12228 / FDA PCI 1200).